A 200-amino-acid chain; its full sequence is NAD(P)H dehydrogenase (quinone) (200 aa).

Residues 4–191 enclose the Flavodoxin-like domain; that stretch reads VLVLYYSSYG…DIARYQGKHV (188 aa). FMN is bound by residues 10-15 and 79-81; these read SSYGHV and TRF. Residue Tyr12 participates in NAD(+) binding. Trp99 is a substrate binding site. Residues 114–120 and His135 contribute to the FMN site; that span reads STGTQHG.

This sequence belongs to the WrbA family. FMN is required as a cofactor.

The enzyme catalyses a quinone + NADH + H(+) = a quinol + NAD(+). The catalysed reaction is a quinone + NADPH + H(+) = a quinol + NADP(+). This Burkholderia vietnamiensis (strain G4 / LMG 22486) (Burkholderia cepacia (strain R1808)) protein is NAD(P)H dehydrogenase (quinone).